We begin with the raw amino-acid sequence, 570 residues long: MMQKLIAQIEKGKPFFEKLSRNIYLRAIRDGFISAMPVILFSSIFLLIAYVPNIFGFKWDKGMEAILMKPYNYTMGLVAFLVAGTTAKSLTDSFNRKLESTNQINFISTMLAAMCGFLFLASDPAKDGGFLSAFMGTKGLLTAFLSAFVTVIVYNFCVKRNITIKMPKEVPPNISQVFKDLIPFSAVIIILYALDLVIRNSFKSNVAEGILKLFEPLFTAADGWIGVTIIFGAFALFWFVGIHGPSIVEPAIAAITYANIEANFKLLQAGEHADKIITSGTQMFIVTFGGTGATLVVPFMFMWMTKSKRNKAIGRASVVPTFFGVNEPILFGAPLVLNPVFFIPFVLAPIVNVWIFKLFVEVLGINSFSVNLPWTTPGPLGIIMGTGFGLWSFVLAITLIVVDIIIYYPFLKVYDSEILDEEEGRKESNSDLKEKVAANFDTKKADSILAASGVSDDAAKASNITEQTNVLVLCAGGGTSGLLANALNKAAEEYHVPVKAAAGGYGAHMDIMKEYQLIILAPQVASNYEDIKQDTDRLGIKLAKTQGAEYIKLTRDGQAALDFVQQQFEN.

The PTS EIIC type-3 domain maps to 9–410; sequence IEKGKPFFEK…VVDIIIYYPF (402 aa). The next 9 membrane-spanning stretches (helical) occupy residues 31–51, 65–85, 104–124, 133–153, 178–198, 223–243, 283–303, 340–360, and 382–402; these read GFIS…IAYV, AILM…VAGT, INFI…ASDP, AFMG…TVIV, FKDL…DLVI, GWIG…VGIH, MFIV…MFMW, VFFI…KLFV, and IIMG…LIVV. Positions 467–570 constitute a PTS EIIB type-3 domain; sequence QTNVLVLCAG…LDFVQQQFEN (104 aa). The active-site Phosphocysteine intermediate; for EIIB activity is Cys474. At Cys474 the chain carries Phosphocysteine; by EIIA.

It localises to the cell membrane. It catalyses the reaction lactose(out) + N(pros)-phospho-L-histidyl-[protein] = lactose 6-phosphate(in) + L-histidyl-[protein]. Functionally, the phosphoenolpyruvate-dependent sugar phosphotransferase system (sugar PTS), a major carbohydrate active transport system, catalyzes the phosphorylation of incoming sugar substrates concomitantly with their translocation across the cell membrane. The enzyme II LacEF PTS system is involved in lactose transport. The chain is PTS system lactose-specific EIICB component from Staphylococcus aureus (strain N315).